Consider the following 380-residue polypeptide: Outer mitochondrial transmembrane helix translocase (380 aa).

Over 1 to 18 (MLSDIPRDALLRPLTRNE) the chain is Mitochondrial intermembrane. A helical membrane pass occupies residues 19 to 37 (VVGMLVRLTVFGAATYYSI). Residues 38 to 380 (KWVVDALDPT…PANLREVPLD (343 aa)) lie on the Cytoplasmic side of the membrane. Residue 136–143 (GPPGCGKT) coordinates ATP.

The protein belongs to the AAA ATPase family. MSP1 subfamily.

It localises to the mitochondrion outer membrane. Its subcellular location is the peroxisome membrane. The protein localises to the postsynaptic cell membrane. The catalysed reaction is [protein]-with a C-terminal TM segment(out) + ATP + H2O = [protein]-with a C-terminal TM segment(in) + ADP + phosphate + H(+). Its function is as follows. Outer mitochondrial translocase required to remove mislocalized tail-anchored transmembrane proteins on mitochondria. Specifically recognizes and binds tail-anchored transmembrane proteins: acts as a dislocase that mediates the ATP-dependent extraction of mistargeted tail-anchored transmembrane proteins from the mitochondrion outer membrane. Also plays a critical role in regulating the surface expression of AMPA receptors (AMPAR), thereby regulating synaptic plasticity and learning and memory. The protein is Outer mitochondrial transmembrane helix translocase of Danio rerio (Zebrafish).